The primary structure comprises 89 residues: Microcin N (89 aa).

The N-terminal stretch at 1-15 (MRELDREELNCVGGA) is a signal peptide.

Belongs to the class IIa microcin family. Mass spectrometry suggests 3 of the 4 Met residues of the mature peptide are oxidized.

It is found in the secreted. In terms of biological role, active against E.coli and Salmonella, but not Listeria or Campylobacter. Channel-forming microcin. Probably neutralized by its immunity protein McnI. In Escherichia coli, this protein is Microcin N.